Consider the following 156-residue polypeptide: Large ribosomal subunit protein uL23 (156 aa).

Positions 1–19 (MAPKAKKEAPAPPKVEAKA) are enriched in basic and acidic residues. Residues 1-67 (MAPKAKKEAP…PKYPRKSAPR (67 aa)) form a disordered region. Ala-2 is subject to N,N,N-trimethylalanine. Residue Lys-14 forms a Glycyl lysine isopeptide (Lys-Gly) (interchain with G-Cter in SUMO2) linkage. The span at 20–67 (KALKAKKAVLKGVHSHKKKKIRTSPTFRRPKTLRLRRQPKYPRKSAPR) shows a compositional bias: basic residues. The tract at residues 32-74 (VHSHKKKKIRTSPTFRRPKTLRLRRQPKYPRKSAPRRNKLDHY) is beta-like import receptor binding (BIB) domain. Position 41 is a citrulline (Arg-41). Position 43 is a phosphoserine (Ser-43). Phosphothreonine is present on Thr-45. An N6-acetyllysine modification is found at Lys-70.

Belongs to the universal ribosomal protein uL23 family. Component of the large ribosomal subunit. Interacts with LYAR and GNL2. Interacts with MDM2; this interaction may promote MDM2-mediated p53/TP53 polyubiquitination. Directly interacts (via BIB domain) with IPO5, IPO7, KPNB1 and TNPO1; these interactions are involved in RPL23A nuclear import for the assembly of ribosomal subunits. Interacts with IPO8. In terms of processing, N-terminus is methylated by METTL11A/NTM1. Citrullinated by PADI4.

The protein localises to the cytoplasm. Its subcellular location is the nucleus. Its function is as follows. Component of the large ribosomal subunit. The ribosome is a large ribonucleoprotein complex responsible for the synthesis of proteins in the cell. Binds a specific region on the 26S rRNA. May promote p53/TP53 degradation possibly through the stimulation of MDM2-mediated TP53 polyubiquitination. The protein is Large ribosomal subunit protein uL23 (RPL23A) of Oryctolagus cuniculus (Rabbit).